The sequence spans 832 residues: Cytosolic carboxypeptidase-like protein 5 (832 aa).

The interval 27-50 (TVPSDGEGVGGAATAPTSGSASSP) is disordered. Over residues 38–50 (AATAPTSGSASSP) the composition is skewed to low complexity. The Peptidase M14 domain occupies 157 to 571 (YPFSYSDCQD…ALAIAALDMA (415 aa)). Zn(2+) is bound by residues His252 and Glu255. A compositionally biased stretch (low complexity) spans 343–354 (NSKNPSNQQPSS). 2 disordered regions span residues 343 to 362 (NSKNPSNQQPSSLHLPPEVP) and 376 to 402 (LHLGQSPDGENHDRWTETEPTEEKTDP). Over residues 384-401 (GENHDRWTETEPTEEKTD) the composition is skewed to basic and acidic residues. Zn(2+) is bound at residue His435. Glu517 (proton donor/acceptor) is an active-site residue. Positions 606 to 752 (STANVGLNKK…ASPTSSRNMG (147 aa)) are disordered. Residues 621 to 636 (PPKSNNGLPVSCSENA) show a composition bias toward polar residues. The segment covering 644-654 (STGTSTGGSSS) has biased composition (low complexity). The span at 655–666 (QQNSPQMKNSPS) shows a compositional bias: polar residues. The span at 708–752 (QQQQQQQQQQQQQQQQPLNQRSTTSSLAPSPTLASASPTSSRNMG) shows a compositional bias: low complexity.

The protein belongs to the peptidase M14 family. The cofactor is Zn(2+).

The protein resides in the cytoplasm. The protein localises to the cytosol. It localises to the nucleus. Its subcellular location is the cytoskeleton. It is found in the spindle. The protein resides in the midbody. It catalyses the reaction gamma-L-glutamyl-L-glutamyl-[protein] + H2O = L-glutamyl-[protein] + L-glutamate. The enzyme catalyses (L-glutamyl)(n+1)-gamma-L-glutamyl-L-glutamyl-[protein] + H2O = (L-glutamyl)(n)-gamma-L-glutamyl-L-glutamyl-[protein] + L-glutamate. It carries out the reaction C-terminal L-alpha-aminoacyl-L-glutamyl-[tubulin] + H2O = C-terminal L-alpha-aminoacyl-[tubulin] + L-glutamate. The catalysed reaction is C-terminal L-alpha-aminoacyl-L-glutamyl-L-glutamyl-[tubulin] + H2O = C-terminal L-alpha-aminoacyl-L-glutamyl-[tubulin] + L-glutamate. In terms of biological role, metallocarboxypeptidase that mediates deglutamylation of tubulin and non-tubulin target proteins. Catalyzes the removal of polyglutamate side chains present on the gamma-carboxyl group of glutamate residues within the C-terminal tail of alpha- and beta-tubulin. Cleaves alpha- and gamma-linked polyglutamate tubulin side-chain, as well as the branching point glutamate. Also catalyzes the removal of alpha-linked glutamate residues from the carboxy-terminus of alpha-tubulin. Mediates deglutamylation of nucleotidyltransferase CGAS, leading to CGAS antiviral defense response activation. This chain is Cytosolic carboxypeptidase-like protein 5 (Agbl5), found in Rattus norvegicus (Rat).